A 663-amino-acid polypeptide reads, in one-letter code: General transcription and DNA repair factor IIH subunit tcf-29 (663 aa).

2 BSD domains span residues 147–206 (WFED…RAYA) and 227–278 (ENGE…LSKK). 2 disordered regions span residues 452–491 (DSDGRGGIDLHRSIGVDPDSDDEGNNSLDSKSGPKPQHVG) and 513–535 (HLTTTTTHGGSHTTTTNASEERP). The span at 453-465 (SDGRGGIDLHRSI) shows a compositional bias: basic and acidic residues. The segment covering 515-528 (TTTTTHGGSHTTTT) has biased composition (low complexity).

The protein belongs to the TFB1 family. In terms of assembly, component of the 7-subunit TFIIH core complex composed of XPB/rad25, XPD/dnr-10, tcf-30/SSL1, tcf-29/TFB1, tcf-11/TFB2, tcf-14/TFB4 and rtf-1/TFB5, which is active in NER. The core complex associates with the 3-subunit CTD-kinase module TFIIK composed of div-66/cyclin H, prk-3/KIN28 and rtf-2/TFB3 to form the 10-subunit holoenzyme (holo-TFIIH) active in transcription.

The protein resides in the nucleus. In terms of biological role, component of the general transcription and DNA repair factor IIH (TFIIH) core complex, which is involved in general and transcription-coupled nucleotide excision repair (NER) of damaged DNA and, when complexed to TFIIK, in RNA transcription by RNA polymerase II. In NER, TFIIH acts by opening DNA around the lesion to allow the excision of the damaged oligonucleotide and its replacement by a new DNA fragment. In transcription, TFIIH has an essential role in transcription initiation. When the pre-initiation complex (PIC) has been established, TFIIH is required for promoter opening and promoter escape. Phosphorylation of the C-terminal tail (CTD) of the largest subunit of RNA polymerase II by the kinase module TFIIK controls the initiation of transcription. This chain is General transcription and DNA repair factor IIH subunit tcf-29 (tcf-29), found in Neurospora crassa (strain ATCC 24698 / 74-OR23-1A / CBS 708.71 / DSM 1257 / FGSC 987).